The primary structure comprises 354 residues: Serum paraoxonase/arylesterase 2 (354 aa).

A disulfide bridge links Cys42 with Cys352. Positions 53 and 54 each coordinate Ca(2+). His114 (proton acceptor) is an active-site residue. Ca(2+) contacts are provided by Ile116, Asn167, Asp168, and Asn223. Residue Asn254 is glycosylated (N-linked (GlcNAc...) asparagine). Residues Asp268 and Asn269 each coordinate Ca(2+). Asn269 and Asn323 each carry an N-linked (GlcNAc...) asparagine glycan.

It belongs to the paraoxonase family. In terms of assembly, homotrimer. Requires Ca(2+) as cofactor. Glycosylated. Post-translationally, the signal sequence is not cleaved.

Its subcellular location is the membrane. It carries out the reaction a phenyl acetate + H2O = a phenol + acetate + H(+). It catalyses the reaction an N-acyl-L-homoserine lactone + H2O = an N-acyl-L-homoserine + H(+). Capable of hydrolyzing lactones and a number of aromatic carboxylic acid esters. This is Serum paraoxonase/arylesterase 2 (PON2) from Canis lupus familiaris (Dog).